The following is a 612-amino-acid chain: Threonine--tRNA ligase (612 aa).

The catalytic stretch occupies residues 218–509; sequence DHRKLGVELG…LSEHFGGNFP (292 aa). Residues C310, H361, and H486 each coordinate Zn(2+).

It belongs to the class-II aminoacyl-tRNA synthetase family. In terms of assembly, homodimer. It depends on Zn(2+) as a cofactor.

Its subcellular location is the cytoplasm. The catalysed reaction is tRNA(Thr) + L-threonine + ATP = L-threonyl-tRNA(Thr) + AMP + diphosphate + H(+). Catalyzes the attachment of threonine to tRNA(Thr) in a two-step reaction: L-threonine is first activated by ATP to form Thr-AMP and then transferred to the acceptor end of tRNA(Thr). Also edits incorrectly charged L-seryl-tRNA(Thr). The chain is Threonine--tRNA ligase from Helicobacter pylori (strain ATCC 700392 / 26695) (Campylobacter pylori).